The chain runs to 407 residues: Proteasome-activating nucleotidase (407 aa).

A coiled-coil region spans residues 22-67 (KEKTQIAELESKVLRLELKNKDISRENVQIKKENEILKRELDKLRI). ATP-binding positions include 192-197 (GTGKTL) and H331. Positions 405–407 (MYG) are docks into pockets in the proteasome alpha-ring to cause gate opening.

Belongs to the AAA ATPase family. Homohexamer. The hexameric complex has a two-ring architecture resembling a top hat that caps the 20S proteasome core at one or both ends. Upon ATP-binding, the C-terminus of PAN interacts with the alpha-rings of the proteasome core by binding to the intersubunit pockets.

The protein resides in the cytoplasm. Functionally, ATPase which is responsible for recognizing, binding, unfolding and translocation of substrate proteins into the archaeal 20S proteasome core particle. Is essential for opening the gate of the 20S proteasome via an interaction with its C-terminus, thereby allowing substrate entry and access to the site of proteolysis. Thus, the C-termini of the proteasomal ATPase function like a 'key in a lock' to induce gate opening and therefore regulate proteolysis. Unfolding activity requires energy from ATP hydrolysis, whereas ATP binding alone promotes ATPase-20S proteasome association which triggers gate opening, and supports translocation of unfolded substrates. The polypeptide is Proteasome-activating nucleotidase (Methanococcus maripaludis (strain C6 / ATCC BAA-1332)).